Consider the following 289-residue polypeptide: ATP synthase gamma chain (289 aa).

This sequence belongs to the ATPase gamma chain family. In terms of assembly, F-type ATPases have 2 components, CF(1) - the catalytic core - and CF(0) - the membrane proton channel. CF(1) has five subunits: alpha(3), beta(3), gamma(1), delta(1), epsilon(1). CF(0) has three main subunits: a, b and c.

The protein resides in the cell inner membrane. In terms of biological role, produces ATP from ADP in the presence of a proton gradient across the membrane. The gamma chain is believed to be important in regulating ATPase activity and the flow of protons through the CF(0) complex. This Azoarcus sp. (strain BH72) protein is ATP synthase gamma chain.